Consider the following 282-residue polypeptide: Flagellin (282 aa).

Belongs to the bacterial flagellin family.

It localises to the secreted. The protein localises to the bacterial flagellum. Functionally, flagellin is the subunit protein which polymerizes to form the filaments of bacterial flagella. The flagellum is required to cause a persistent disease in a murine model of infection. This is Flagellin (fliC) from Brucella melitensis biotype 1 (strain ATCC 23456 / CCUG 17765 / NCTC 10094 / 16M).